Reading from the N-terminus, the 431-residue chain is Trigger factor (431 aa).

In terms of domain architecture, PPIase FKBP-type spans 158-243; the sequence is GYLVALETWS…VIEVSEPVLL (86 aa).

This sequence belongs to the FKBP-type PPIase family. Tig subfamily.

Its subcellular location is the cytoplasm. It carries out the reaction [protein]-peptidylproline (omega=180) = [protein]-peptidylproline (omega=0). Its function is as follows. Involved in protein export. Acts as a chaperone by maintaining the newly synthesized protein in an open conformation. Functions as a peptidyl-prolyl cis-trans isomerase. In Xylella fastidiosa (strain M23), this protein is Trigger factor.